Reading from the N-terminus, the 376-residue chain is ATP phosphoribosyltransferase regulatory subunit (376 aa).

It belongs to the class-II aminoacyl-tRNA synthetase family. HisZ subfamily. In terms of assembly, heteromultimer composed of HisG and HisZ subunits.

The protein localises to the cytoplasm. Its pathway is amino-acid biosynthesis; L-histidine biosynthesis; L-histidine from 5-phospho-alpha-D-ribose 1-diphosphate: step 1/9. In terms of biological role, required for the first step of histidine biosynthesis. May allow the feedback regulation of ATP phosphoribosyltransferase activity by histidine. The chain is ATP phosphoribosyltransferase regulatory subunit from Brucella canis (strain ATCC 23365 / NCTC 10854 / RM-666).